We begin with the raw amino-acid sequence, 234 residues long: Large ribosomal subunit protein uL1c (234 aa).

The protein belongs to the universal ribosomal protein uL1 family. As to quaternary structure, part of the 50S ribosomal subunit.

The protein resides in the plastid. It localises to the chloroplast. Functionally, binds directly to 23S rRNA. Might be involved in E site tRNA release (Potential). This Guillardia theta (Cryptophyte) protein is Large ribosomal subunit protein uL1c (rpl1).